A 674-amino-acid polypeptide reads, in one-letter code: Probable potassium transport system protein Kup (674 aa).

12 helical membrane-spanning segments follow: residues 7–27, 52–72, 95–115, 145–165, 169–189, 204–224, 244–264, 291–311, 342–362, 368–388, 397–417, and 425–445; these read IFWGALITLGIVYGDIGTSPL, LSLVFWTLMLMTTIKYVLIAL, WLILPALLGGAALLADGTLTP, LVTFVILLVLFLIQRFGTSFI, FGPLMLLWFSFLAIFGIVNLI, LMLLFSPANKVGIFILGSVFL, IYLTWPFVCGALVLNYFGQGA, VYLFGVLISTIAAIIASQALI, IYIRTINWSLCICTLLVLVYF, MEAAYGLAITITMLMTTILLS, VVFNGIFLAVFLSVELIFLIS, and GGYVTLLITLLILLIMVIWYF.

It belongs to the HAK/KUP transporter (TC 2.A.72) family.

Its subcellular location is the cell membrane. It catalyses the reaction K(+)(in) + H(+)(in) = K(+)(out) + H(+)(out). Its function is as follows. Transport of potassium into the cell. Likely operates as a K(+):H(+) symporter. The protein is Probable potassium transport system protein Kup of Ligilactobacillus salivarius (strain UCC118) (Lactobacillus salivarius).